Here is a 94-residue protein sequence, read N- to C-terminus: Co-chaperonin GroES (94 aa).

The protein belongs to the GroES chaperonin family. As to quaternary structure, heptamer of 7 subunits arranged in a ring. Interacts with the chaperonin GroEL.

The protein localises to the cytoplasm. Together with the chaperonin GroEL, plays an essential role in assisting protein folding. The GroEL-GroES system forms a nano-cage that allows encapsulation of the non-native substrate proteins and provides a physical environment optimized to promote and accelerate protein folding. GroES binds to the apical surface of the GroEL ring, thereby capping the opening of the GroEL channel. The protein is Co-chaperonin GroES of Ehrlichia canis (strain Jake).